The chain runs to 88 residues: MAKEELIELQGVVDEVLPDSRYRVTLDNGVAVGAYASGRIRKHRIRILAGDRVTLEMSPYDLTKGRINFRHKDERPSSAPANRNFVRR.

The 72-residue stretch at 1–72 (MAKEELIELQ…TKGRINFRHK (72 aa)) folds into the S1-like domain.

Belongs to the IF-1 family. Component of the 30S ribosomal translation pre-initiation complex which assembles on the 30S ribosome in the order IF-2 and IF-3, IF-1 and N-formylmethionyl-tRNA(fMet); mRNA recruitment can occur at any time during PIC assembly.

The protein localises to the cytoplasm. Its function is as follows. One of the essential components for the initiation of protein synthesis. Stabilizes the binding of IF-2 and IF-3 on the 30S subunit to which N-formylmethionyl-tRNA(fMet) subsequently binds. Helps modulate mRNA selection, yielding the 30S pre-initiation complex (PIC). Upon addition of the 50S ribosomal subunit IF-1, IF-2 and IF-3 are released leaving the mature 70S translation initiation complex. This is Translation initiation factor IF-1 2 from Bordetella avium (strain 197N).